A 567-amino-acid polypeptide reads, in one-letter code: Major facilitator superfamily transporter MG061 (567 aa).

12 consecutive transmembrane segments (helical) span residues 15 to 35, 78 to 98, 104 to 124, 193 to 213, 230 to 250, 264 to 284, 321 to 341, 363 to 383, 405 to 425, 426 to 446, 462 to 482, and 503 to 523; these read ITLWIIVIFGYLLFVVEWFVI, WTITLLRAVGSILCGVVVLKF, VLIMMGIMCVCFPFLIIGDPL, GYALFIIFRSTIAIGGTTLVV, ILSNANLWGFNIGIAVVFTPF, VYIMTVMILVVFANLCLFLWF, LIGVYGIVLILIVNPLTPAWF, TGLATLAIFWVIGYALGFVVF, IVVLLIIIMFAATLGIGSAAG, FALISIFSFIGGAFAWSLSSS, LPILFGFCWGFGYIAYTLFDI, and PGVIVSIVFFLGLIALANLIV.

This sequence belongs to the major facilitator superfamily.

Its subcellular location is the cell membrane. In Mycoplasma genitalium (strain ATCC 33530 / DSM 19775 / NCTC 10195 / G37) (Mycoplasmoides genitalium), this protein is Major facilitator superfamily transporter MG061.